A 314-amino-acid chain; its full sequence is MTEPLRIVFAGTPEFAAEHLKALLDSPHQIVAVYTQPDRPAGRGQKLMPSPVKQLALQHDIPVMQPPTLRAPEAQAELAALKPDLMVVVAYGLILPQVVLDIPRLGCINSHASLLPRWRGAAPIQRAVQAGDAESGVTVMRMEAGLDTGPMLLKAVTPISAQDTGGTLHDRLAELGPPAVLQAIAGLAEGSLVGEAQDDSLANYAHKLNKDEARIDWTRPADELERLVRAFNPWPICHSTLNEEALKVLAADLAEGQGAPGTILSASKDGLIVACGQNALRLTRLQLPGGKPLNFTDLFNSRREKFAIGTVLGQ.

113 to 116 (SLLP) contacts (6S)-5,6,7,8-tetrahydrofolate.

The protein belongs to the Fmt family.

The catalysed reaction is L-methionyl-tRNA(fMet) + (6R)-10-formyltetrahydrofolate = N-formyl-L-methionyl-tRNA(fMet) + (6S)-5,6,7,8-tetrahydrofolate + H(+). Its function is as follows. Attaches a formyl group to the free amino group of methionyl-tRNA(fMet). The formyl group appears to play a dual role in the initiator identity of N-formylmethionyl-tRNA by promoting its recognition by IF2 and preventing the misappropriation of this tRNA by the elongation apparatus. In Pseudomonas syringae pv. tomato (strain ATCC BAA-871 / DC3000), this protein is Methionyl-tRNA formyltransferase.